Reading from the N-terminus, the 241-residue chain is Anthocyanidin 3-O-glucosyltransferase 4 (241 aa).

UDP-alpha-D-glucose contacts are provided by glutamine 104, histidine 119, tryptophan 122, asparagine 123, serine 124, and glutamate 127. An anthocyanidin is bound at residue alanine 142. UDP-alpha-D-glucose is bound by residues glutamate 143 and glutamine 144.

Belongs to the UDP-glycosyltransferase family. Faintly expressed in cotyledons, roots and leaves.

It catalyses the reaction an anthocyanidin + UDP-alpha-D-glucose + H(+) = an anthocyanidin 3-O-beta-D-glucoside + UDP. It functions in the pathway pigment biosynthesis; anthocyanin biosynthesis. In the presence of other necessary color factors, this glycosylation reaction allows the accumulation of anthocyanin pigments. The chain is Anthocyanidin 3-O-glucosyltransferase 4 (GT4) from Manihot esculenta (Cassava).